The primary structure comprises 194 residues: WASH complex subunit 3 (194 aa).

N-acetylmethionine is present on Met-1. Residues 46 to 74 (AVCEEKLADLSLRIQQIETTLNILDAKLS) adopt a coiled-coil conformation. Disordered stretches follow at residues 94–126 (VTNG…PSEN) and 158–194 (SEGL…SFSD). The segment covering 98 to 113 (SHSETTSEQTQQNSTQ) has biased composition (low complexity). Over residues 114-126 (DSGAQESEAPSEN) the composition is skewed to polar residues.

This sequence belongs to the CCDC53 family. In terms of assembly, component of the WASH core complex also described as WASH regulatory complex (SHRC) composed of WASHC1, WASHC2, WASHC3, WASHC4 and WASHC5. The WASH core complex associates via WASHC2 with the F-actin-capping protein dimer (formed by CAPZA1, CAPZA2 or CAPZA3 and CAPZB) in a transient or substoichiometric manner which was initially described as WASH complex.

The protein resides in the early endosome. Functionally, acts as a component of the WASH core complex that functions as a nucleation-promoting factor (NPF) at the surface of endosomes, where it recruits and activates the Arp2/3 complex to induce actin polymerization, playing a key role in the fission of tubules that serve as transport intermediates during endosome sortingg. The sequence is that of WASH complex subunit 3 from Mus musculus (Mouse).